An 84-amino-acid polypeptide reads, in one-letter code: Magnetosome protein MamR (84 aa).

This sequence belongs to the magnetosome MamR family.

The protein resides in the magnetosome. Its function is as follows. May play a role in controlling magnetite number and size but not in control of magnetite morphology. This is Magnetosome protein MamR from Paramagnetospirillum magneticum (strain ATCC 700264 / AMB-1) (Magnetospirillum magneticum).